Consider the following 241-residue polypeptide: Probable 2-phosphosulfolactate phosphatase (241 aa).

The protein belongs to the ComB family. Requires Mg(2+) as cofactor.

The catalysed reaction is (2R)-O-phospho-3-sulfolactate + H2O = (2R)-3-sulfolactate + phosphate. This Gloeothece citriformis (strain PCC 7424) (Cyanothece sp. (strain PCC 7424)) protein is Probable 2-phosphosulfolactate phosphatase.